The following is a 301-amino-acid chain: Probable alpha-L-glutamate ligase (301 aa).

In terms of domain architecture, ATP-grasp spans 104–287; sequence TQLLARKGIG…IAGTIYAFLE (184 aa). ATP-binding positions include Lys-141, 178 to 179, Asp-187, and 211 to 213; these read EY and RSN. Residues Asp-248, Glu-260, and Asn-262 each coordinate Mg(2+). Residues Asp-248, Glu-260, and Asn-262 each contribute to the Mn(2+) site.

It belongs to the RimK family. Mg(2+) serves as cofactor. It depends on Mn(2+) as a cofactor.

The chain is Probable alpha-L-glutamate ligase from Alkalilimnicola ehrlichii (strain ATCC BAA-1101 / DSM 17681 / MLHE-1).